The following is a 111-amino-acid chain: Putative single-stranded DNA-binding protein ycf41 (111 aa).

In terms of domain architecture, SSB spans 1–98 (MNKCNLLVQI…FSTSRIFKYK (98 aa)).

It is found in the plastid. The protein resides in the chloroplast. The chain is Putative single-stranded DNA-binding protein ycf41 (ycf41) from Porphyra purpurea (Red seaweed).